Consider the following 389-residue polypeptide: MGTNLSVPNPLGFLPDHQLDPAFGANSTNPDWDFNPIKDHWPAANQVGVGAFGPGLTPPHGGILGWSPQAQGILTTVSTIPPPASTNRQSGRQPTPISPPLRDSHPQAMQWNSTALHQALQDPRVRGLYLPAGGSSSGTVNPAPNIASHISSISARTGDPVTIMENITSGFLGPLLVLQAGFFLLTRILTIPQSLDSWWTSLNFLGGSPVCLGQNSQSPTSNHSPTSCPPICPGYRWMCLRRFIIFLFILLLCLIFLLVLLDYQGMLPVCPLIPGSTTTSTGPCKTCTTPAQGNSKFPSCCCTKPTDGNCTCIPIPSSWAFAKYLWEWASVRFSWLSLLVPFVQWFVGLSPTVWLSAIWMMWYWGPSLYSIVSPFIPLLPIFFCLWVYI.

Met-1 is modified (N-acetylmethionine). Gly-2 carries N-myristoyl glycine; by host lipidation. The segment at 2–108 (GTNLSVPNPL…PPLRDSHPQA (107 aa)) is pre-S1. The tract at residues 2-163 (GTNLSVPNPL…SARTGDPVTI (162 aa)) is pre-S. Residues 2-170 (GTNLSVPNPL…VTIMENITSG (169 aa)) are Virion surface; in external conformation-facing. Residues 2–242 (GTNLSVPNPL…PGYRWMCLRR (241 aa)) are Intravirion; in internal conformation-facing. Residues 77–95 (VSTIPPPASTNRQSGRQPT) are compositionally biased toward polar residues. The segment at 77 to 103 (VSTIPPPASTNRQSGRQPTPISPPLRD) is disordered. Residues 109–163 (MQWNSTALHQALQDPRVRGLYLPAGGSSSGTVNPAPNIASHISSISARTGDPVTI) form a pre-S2 region. A helical transmembrane segment spans residues 171-191 (FLGPLLVLQAGFFLLTRILTI). The Intravirion; in external conformation portion of the chain corresponds to 192 to 242 (PQSLDSWWTSLNFLGGSPVCLGQNSQSPTSNHSPTSCPPICPGYRWMCLRR). Residues 243 to 263 (FIIFLFILLLCLIFLLVLLDY) traverse the membrane as a helical segment. Residues 264–337 (QGMLPVCPLI…WASVRFSWLS (74 aa)) lie on the Virion surface side of the membrane. Asn-309 is a glycosylation site (N-linked (GlcNAc...) asparagine; by host). A helical membrane pass occupies residues 338 to 358 (LLVPFVQWFVGLSPTVWLSAI). Residues 359 to 364 (WMMWYW) lie on the Intravirion side of the membrane. The chain crosses the membrane as a helical span at residues 365-387 (GPSLYSIVSPFIPLLPIFFCLWV). At 388–389 (YI) the chain is on the virion surface side.

It belongs to the orthohepadnavirus major surface antigen family. In terms of assembly, in its internal form (Li-HBsAg), interacts with the capsid protein and with the isoform S. Interacts with host chaperone CANX. As to quaternary structure, associates with host chaperone CANX through its pre-S2 N glycan; this association may be essential for isoform M proper secretion. Interacts with isoform L. Interacts with the antigens of satellite virus HDV (HDVAgs); this interaction is required for encapsidation of HDV genomic RNA. Post-translationally, isoform M is N-terminally acetylated by host at a ratio of 90%, and N-glycosylated by host at the pre-S2 region. Myristoylated.

It is found in the virion membrane. Its function is as follows. The large envelope protein exists in two topological conformations, one which is termed 'external' or Le-HBsAg and the other 'internal' or Li-HBsAg. In its external conformation the protein attaches the virus to cell receptors and thereby initiating infection. This interaction determines the species specificity and liver tropism. This attachment induces virion internalization predominantly through caveolin-mediated endocytosis. The large envelope protein also assures fusion between virion membrane and endosomal membrane. In its internal conformation the protein plays a role in virion morphogenesis and mediates the contact with the nucleocapsid like a matrix protein. In terms of biological role, the middle envelope protein plays an important role in the budding of the virion. It is involved in the induction of budding in a nucleocapsid independent way. In this process the majority of envelope proteins bud to form subviral lipoprotein particles of 22 nm of diameter that do not contain a nucleocapsid. This chain is Large envelope protein, found in Hepatitis B virus genotype A2 subtype adw (isolate Japan/Nishioka/1983) (HBV-A).